Here is a 296-residue protein sequence, read N- to C-terminus: tRNA dimethylallyltransferase (296 aa).

Residue G2–T9 coordinates ATP. Substrate is bound at residue T4 to T9. Interaction with substrate tRNA stretches follow at residues D27 to L30, Q151 to R155, and R232 to R237.

The protein belongs to the IPP transferase family. As to quaternary structure, monomer. Mg(2+) is required as a cofactor.

It carries out the reaction adenosine(37) in tRNA + dimethylallyl diphosphate = N(6)-dimethylallyladenosine(37) in tRNA + diphosphate. In terms of biological role, catalyzes the transfer of a dimethylallyl group onto the adenine at position 37 in tRNAs that read codons beginning with uridine, leading to the formation of N6-(dimethylallyl)adenosine (i(6)A). The polypeptide is tRNA dimethylallyltransferase (Shewanella woodyi (strain ATCC 51908 / MS32)).